The following is a 427-amino-acid chain: 3-phosphoshikimate 1-carboxyvinyltransferase (427 aa).

3-phosphoshikimate contacts are provided by Lys-20, Ser-21, and Arg-25. Residue Lys-20 participates in phosphoenolpyruvate binding. The phosphoenolpyruvate site is built by Gly-92 and Arg-120. The 3-phosphoshikimate site is built by Ser-166, Gln-168, Asp-312, and Lys-339. Gln-168 contacts phosphoenolpyruvate. Residue Asp-312 is the Proton acceptor of the active site. The phosphoenolpyruvate site is built by Arg-343 and Arg-385.

The protein belongs to the EPSP synthase family. Monomer.

Its subcellular location is the cytoplasm. The catalysed reaction is 3-phosphoshikimate + phosphoenolpyruvate = 5-O-(1-carboxyvinyl)-3-phosphoshikimate + phosphate. It functions in the pathway metabolic intermediate biosynthesis; chorismate biosynthesis; chorismate from D-erythrose 4-phosphate and phosphoenolpyruvate: step 6/7. Catalyzes the transfer of the enolpyruvyl moiety of phosphoenolpyruvate (PEP) to the 5-hydroxyl of shikimate-3-phosphate (S3P) to produce enolpyruvyl shikimate-3-phosphate and inorganic phosphate. This chain is 3-phosphoshikimate 1-carboxyvinyltransferase, found in Streptococcus mutans serotype c (strain ATCC 700610 / UA159).